The sequence spans 1083 residues: Kinesin-like protein KIN-14R (1083 aa).

Residues 264–418 (HDKYEKKIAE…NHIQETKGNI (155 aa)) are a coiled coil. A Kinesin motor domain is found at 417-739 (NIRVFCRCRP…LNFATRVRGV (323 aa)). Position 500–507 (500–507 (GQTGTGKT)) interacts with ATP. Coiled coils occupy residues 746-876 (KQVD…SEGS) and 905-947 (IKEL…MATT). Positions 967 to 1083 (EDNFGNENME…RDSKKKIWSR (117 aa)) are disordered. The span at 971 to 985 (GNENMESNTNILRTS) shows a compositional bias: polar residues. Residues 1020–1032 (PQMKEKRIRKSDP) show a composition bias toward basic and acidic residues. The span at 1044-1054 (RTASGSSSQVP) shows a compositional bias: polar residues. A compositionally biased stretch (basic and acidic residues) spans 1062–1083 (KREQQEVPVVKERDSKKKIWSR).

Belongs to the TRAFAC class myosin-kinesin ATPase superfamily. Kinesin family. KIN-14 subfamily.

In Arabidopsis thaliana (Mouse-ear cress), this protein is Kinesin-like protein KIN-14R.